Consider the following 120-residue polypeptide: Large ribosomal subunit protein eL8 (120 aa).

It belongs to the eukaryotic ribosomal protein eL8 family. In terms of assembly, part of the 50S ribosomal subunit. Probably part of the RNase P complex.

It is found in the cytoplasm. In terms of biological role, multifunctional RNA-binding protein that recognizes the K-turn motif in ribosomal RNA, the RNA component of RNase P, box H/ACA, box C/D and box C'/D' sRNAs. This Natronomonas pharaonis (strain ATCC 35678 / DSM 2160 / CIP 103997 / JCM 8858 / NBRC 14720 / NCIMB 2260 / Gabara) (Halobacterium pharaonis) protein is Large ribosomal subunit protein eL8.